The chain runs to 272 residues: 2-dehydro-3-deoxyphosphooctonate aldolase (272 aa).

The protein belongs to the KdsA family.

It is found in the cytoplasm. The enzyme catalyses D-arabinose 5-phosphate + phosphoenolpyruvate + H2O = 3-deoxy-alpha-D-manno-2-octulosonate-8-phosphate + phosphate. Its pathway is carbohydrate biosynthesis; 3-deoxy-D-manno-octulosonate biosynthesis; 3-deoxy-D-manno-octulosonate from D-ribulose 5-phosphate: step 2/3. The protein operates within bacterial outer membrane biogenesis; lipopolysaccharide biosynthesis. This is 2-dehydro-3-deoxyphosphooctonate aldolase from Geotalea uraniireducens (strain Rf4) (Geobacter uraniireducens).